Consider the following 236-residue polypeptide: Ring protein 1 (236 aa).

As to quaternary structure, homododecamer.

Its subcellular location is the virion. Its function is as follows. Forms the tail multi-ring barrel with ring protein 2, ring protein 3 and ring protein 4. In Bacteroides intestinalis (Bacteroides phage PhiCrAss001), this protein is Ring protein 1.